The sequence spans 70 residues: Cytochrome c oxidase subunit 8B, mitochondrial (70 aa).

A mitochondrion-targeting transit peptide spans 1 to 24 (MLSLRPALRLLQAPLRCWAVPKAH). Residues 25 to 35 (VSAKPAETPTS) are Mitochondrial matrix-facing. A helical membrane pass occupies residues 36 to 59 (PAEQAVGLSFIFITFLGPAGWILS). Over 60-70 (HVENYKKRPRA) the chain is Mitochondrial intermembrane.

It belongs to the cytochrome c oxidase VIII family. In terms of assembly, component of the cytochrome c oxidase (complex IV, CIV), a multisubunit enzyme composed of 14 subunits. The complex is composed of a catalytic core of 3 subunits MT-CO1, MT-CO2 and MT-CO3, encoded in the mitochondrial DNA, and 11 supernumerary subunits COX4I, COX5A, COX5B, COX6A, COX6B, COX6C, COX7A, COX7B, COX7C, COX8 and NDUFA4, which are encoded in the nuclear genome. The complex exists as a monomer or a dimer and forms supercomplexes (SCs) in the inner mitochondrial membrane with NADH-ubiquinone oxidoreductase (complex I, CI) and ubiquinol-cytochrome c oxidoreductase (cytochrome b-c1 complex, complex III, CIII), resulting in different assemblies (supercomplex SCI(1)III(2)IV(1) and megacomplex MCI(2)III(2)IV(2)).

The protein localises to the mitochondrion inner membrane. Its pathway is energy metabolism; oxidative phosphorylation. Component of the cytochrome c oxidase, the last enzyme in the mitochondrial electron transport chain which drives oxidative phosphorylation. The respiratory chain contains 3 multisubunit complexes succinate dehydrogenase (complex II, CII), ubiquinol-cytochrome c oxidoreductase (cytochrome b-c1 complex, complex III, CIII) and cytochrome c oxidase (complex IV, CIV), that cooperate to transfer electrons derived from NADH and succinate to molecular oxygen, creating an electrochemical gradient over the inner membrane that drives transmembrane transport and the ATP synthase. Cytochrome c oxidase is the component of the respiratory chain that catalyzes the reduction of oxygen to water. Electrons originating from reduced cytochrome c in the intermembrane space (IMS) are transferred via the dinuclear copper A center (CU(A)) of subunit 2 and heme A of subunit 1 to the active site in subunit 1, a binuclear center (BNC) formed by heme A3 and copper B (CU(B)). The BNC reduces molecular oxygen to 2 water molecules using 4 electrons from cytochrome c in the IMS and 4 protons from the mitochondrial matrix. The protein is Cytochrome c oxidase subunit 8B, mitochondrial (COX8B) of Ateles belzebuth (White-bellied spider monkey).